The chain runs to 431 residues: Adenylosuccinate lyase (431 aa).

Residues 4–5 (RY), 67–69 (RHD), and 93–94 (TS) each bind N(6)-(1,2-dicarboxyethyl)-AMP. H141 functions as the Proton donor/acceptor in the catalytic mechanism. Residue Q212 participates in N(6)-(1,2-dicarboxyethyl)-AMP binding. S262 (proton donor/acceptor) is an active-site residue. N(6)-(1,2-dicarboxyethyl)-AMP-binding positions include S263, 268-270 (KRN), and 307-311 (SVERV).

It belongs to the lyase 1 family. Adenylosuccinate lyase subfamily. Homooligomer. Residues from neighboring subunits contribute catalytic and substrate-binding residues to each active site.

The enzyme catalyses N(6)-(1,2-dicarboxyethyl)-AMP = fumarate + AMP. It catalyses the reaction (2S)-2-[5-amino-1-(5-phospho-beta-D-ribosyl)imidazole-4-carboxamido]succinate = 5-amino-1-(5-phospho-beta-D-ribosyl)imidazole-4-carboxamide + fumarate. Its pathway is purine metabolism; AMP biosynthesis via de novo pathway; AMP from IMP: step 2/2. It functions in the pathway purine metabolism; IMP biosynthesis via de novo pathway; 5-amino-1-(5-phospho-D-ribosyl)imidazole-4-carboxamide from 5-amino-1-(5-phospho-D-ribosyl)imidazole-4-carboxylate: step 2/2. In terms of biological role, catalyzes two reactions in de novo purine nucleotide biosynthesis. Catalyzes the breakdown of 5-aminoimidazole- (N-succinylocarboxamide) ribotide (SAICAR or 2-[5-amino-1-(5-phospho-beta-D-ribosyl)imidazole-4-carboxamido]succinate) to 5-aminoimidazole-4-carboxamide ribotide (AICAR or 5-amino-1-(5-phospho-beta-D-ribosyl)imidazole-4-carboxamide) and fumarate, and of adenylosuccinate (ADS or N(6)-(1,2-dicarboxyethyl)-AMP) to adenosine monophosphate (AMP) and fumarate. The sequence is that of Adenylosuccinate lyase (purB) from Synechocystis sp. (strain ATCC 27184 / PCC 6803 / Kazusa).